Reading from the N-terminus, the 273-residue chain is Outer surface protein A (273 aa).

A signal peptide spans 1-16; it reads MKKYLLGIGLILALIA. A lipid anchor (N-palmitoyl cysteine) is attached at C17. C17 carries S-diacylglycerol cysteine lipidation.

Belongs to the OspA lipoprotein family.

Its subcellular location is the cell outer membrane. The protein localises to the cell surface. This Borreliella burgdorferi (Lyme disease spirochete) protein is Outer surface protein A.